Here is an 80-residue protein sequence, read N- to C-terminus: MINLWMFLALCIVCVSGYIGQVLNVVSAVSSFFGMVILAALIYYFTMWLTGGNELVTGIFMFLAPACGLMIRFMVGYGRR.

A run of 3 helical transmembrane segments spans residues 2-22 (INLW…IGQV), 32-52 (FFGM…LTGG), and 55-75 (LVTG…RFMV).

It localises to the cell membrane. This is an uncharacterized protein from Escherichia coli (strain K12).